Reading from the N-terminus, the 142-residue chain is Hemoglobin A subunit alpha-2 (142 aa).

Residues 2-142 (VLTAGDKANV…VAQNLTSKYR (141 aa)) enclose the Globin domain. An O2-binding site is contributed by His59. Heme b is bound at residue His88.

This sequence belongs to the globin family. Tetramer of alpha-1, alpha-2 and two identical beta chains. As to expression, red blood cells.

Functionally, involved in oxygen transport from the lung to the various peripheral tissues. The chain is Hemoglobin A subunit alpha-2 from Aldabrachelys gigantea (Aldabra giant tortoise).